The sequence spans 381 residues: Putative acyl-CoA dehydrogenase YdbM (381 aa).

Residues 158–160 and 337–341 contribute to the FAD site; these read FTT and RIVGA.

This sequence belongs to the acyl-CoA dehydrogenase family. FAD is required as a cofactor.

In Bacillus subtilis (strain 168), this protein is Putative acyl-CoA dehydrogenase YdbM (ydbM).